Reading from the N-terminus, the 117-residue chain is Large ribosomal subunit protein uL18 (117 aa).

This sequence belongs to the universal ribosomal protein uL18 family. As to quaternary structure, part of the 50S ribosomal subunit; part of the 5S rRNA/L5/L18/L25 subcomplex. Contacts the 5S and 23S rRNAs.

Functionally, this is one of the proteins that bind and probably mediate the attachment of the 5S RNA into the large ribosomal subunit, where it forms part of the central protuberance. In Glaesserella parasuis serovar 5 (strain SH0165) (Haemophilus parasuis), this protein is Large ribosomal subunit protein uL18.